Here is a 297-residue protein sequence, read N- to C-terminus: Manganese efflux system protein MneP (297 aa).

6 helical membrane-spanning segments follow: residues Val12–Leu32, Gly43–Ser63, Ile85–Phe105, Val111–Tyr131, Gly155–Ser175, and Gly177–Phe197.

The protein belongs to the cation diffusion facilitator (CDF) transporter (TC 2.A.4) family.

It is found in the cell membrane. Functionally, primary efflux pump for manganese. May prevent manganese intoxication. This chain is Manganese efflux system protein MneP, found in Bacillus subtilis (strain 168).